A 299-amino-acid chain; its full sequence is NAD kinase (299 aa).

Asp-71 (proton acceptor) is an active-site residue. NAD(+)-binding positions include 71-72 (DG), 145-146 (ND), Arg-173, Asp-175, 186-191 (TAYALS), Ala-210, and Gln-248.

It belongs to the NAD kinase family. The cofactor is a divalent metal cation.

The protein resides in the cytoplasm. The catalysed reaction is NAD(+) + ATP = ADP + NADP(+) + H(+). Its function is as follows. Involved in the regulation of the intracellular balance of NAD and NADP, and is a key enzyme in the biosynthesis of NADP. Catalyzes specifically the phosphorylation on 2'-hydroxyl of the adenosine moiety of NAD to yield NADP. The chain is NAD kinase from Bordetella avium (strain 197N).